We begin with the raw amino-acid sequence, 1960 residues long: Myosin-9 (1960 aa).

The residue at position 2 (Ala-2) is an N-acetylalanine. The tract at residues 2–838 is mediates interaction with LIMCH1; that stretch reads AQQAADKYLY…RLFTKVKPLL (837 aa). An N6-acetyllysine modification is found at Lys-8. Residue Tyr-11 is modified to Phosphotyrosine. A Myosin N-terminal SH3-like domain is found at 27–77; it reads AAKKLVWVPSSKNGFEPASLKEEVGEEAIVELVENGKKVKVNKDDIQKMNP. A Myosin motor domain is found at 81 to 776; sequence SKVEDMAELT…VLAHLEEERD (696 aa). Lys-102 is modified (N6-acetyllysine). 174–181 serves as a coordination point for ATP; that stretch reads GESGAGKT. Residues Lys-299, Lys-435, and Lys-613 each carry the N6-acetyllysine modification. Ser-628 carries the post-translational modification Phosphoserine. Positions 654 to 676 are actin-binding; sequence LAKLMATLRNTNPNFVRCIIPNH. The residue at position 754 (Tyr-754) is a Phosphotyrosine. The region spanning 779 to 808 is the IQ domain; the sequence is ITDVIIGFQACCRGYLARKAFAKRQQQLTA. Residues 841 to 1926 adopt a coiled-coil conformation; that stretch reads IRHEDELLAK…LKNKLRRGDL (1086 aa). Lys-850 bears the N6-succinyllysine mark. N6-acetyllysine is present on residues Lys-860, Lys-975, and Lys-1024. Residues 1035 to 1055 are compositionally biased toward basic and acidic residues; sequence RLRREEKQRQELEKTRRKLEG. The segment at 1035–1057 is disordered; it reads RLRREEKQRQELEKTRRKLEGDS. Phosphoserine is present on Ser-1114. The interval 1117–1167 is disordered; that stretch reads QEDLESERASRNKAEKQKRDLGEELEALKTELEDTLDSTAAQQELRSKREQ. The segment covering 1122-1148 has biased composition (basic and acidic residues); sequence SERASRNKAEKQKRDLGEELEALKTEL. An N6-acetyllysine mark is found at Lys-1234 and Lys-1249. The tract at residues 1327–1352 is disordered; sequence LSTKLKQMEDEKNSFREQLEEEEEAK. Over residues 1332-1352 the composition is skewed to basic and acidic residues; sequence KQMEDEKNSFREQLEEEEEAK. N6-acetyllysine occurs at positions 1357, 1392, 1404, 1410, 1459, and 1638. Lys-1669 bears the N6-succinyllysine mark. The residue at position 1714 (Ser-1714) is a Phosphoserine. The tract at residues 1768–1788 is disordered; that stretch reads LERSHAQKNENARQQLERQNK. N6-acetyllysine occurs at positions 1793, 1802, and 1845. Residues 1877-1908 form a disordered region; the sequence is RQLEEAEEEAQRANASRRKLQRELEDATETAD. Position 1923 is an omega-N-methylarginine (Arg-1923). The residue at position 1939 (Thr-1939) is a Phosphothreonine. Positions 1939–1960 are disordered; sequence TGDCSDEEVDGKADGADAKAAE. Position 1943 is a phosphoserine (Ser-1943). The segment covering 1948-1960 has biased composition (basic and acidic residues); the sequence is DGKADGADAKAAE.

It belongs to the TRAFAC class myosin-kinesin ATPase superfamily. Myosin family. In terms of assembly, myosin is a hexameric protein that consists of 2 heavy chain subunits (MHC), 2 alkali light chain subunits (MLC) and 2 regulatory light chain subunits (MLC-2). Interacts with RASIP1. Interacts with DDR1. Interacts with PDLIM2. Interacts with SVIL. Interacts with HTRA3. Interacts with Myo7a. Interacts with CFAP95. Interacts with LIMCH1; independently of the integration of MYH9 into the myosin complex. Interacts with RAB3A. Interacts with ZBED4. Interacts with S100A4; this interaction increases cell motility. In terms of processing, ISGylated. Post-translationally, ubiquitination.

The protein localises to the cytoplasm. The protein resides in the cytoskeleton. It is found in the cell cortex. Its subcellular location is the cytoplasmic vesicle. It localises to the secretory vesicle. The protein localises to the cortical granule. Its function is as follows. Cellular myosin that appears to play a role in cytokinesis, cell shape, and specialized functions such as secretion and capping. Required for cortical actin clearance prior to oocyte exocytosis. Promotes cell motility in conjunction with S100A4. During cell spreading, plays an important role in cytoskeleton reorganization, focal contact formation (in the margins but not the central part of spreading cells), and lamellipodial retraction; this function is mechanically antagonized by MYH10. The polypeptide is Myosin-9 (Myh9) (Mus musculus (Mouse)).